Here is a 274-residue protein sequence, read N- to C-terminus: Large ribosomal subunit protein uL2 (274 aa).

The tract at residues 224 to 256 (AMNPIDHPHGGGEGRTGEGRHAVDPWGNLTKGY) is disordered. A compositionally biased stretch (basic and acidic residues) spans 229-246 (DHPHGGGEGRTGEGRHAV).

Belongs to the universal ribosomal protein uL2 family. In terms of assembly, part of the 50S ribosomal subunit. Forms a bridge to the 30S subunit in the 70S ribosome.

Functionally, one of the primary rRNA binding proteins. Required for association of the 30S and 50S subunits to form the 70S ribosome, for tRNA binding and peptide bond formation. It has been suggested to have peptidyltransferase activity; this is somewhat controversial. Makes several contacts with the 16S rRNA in the 70S ribosome. The chain is Large ribosomal subunit protein uL2 from Acidovorax sp. (strain JS42).